Consider the following 156-residue polypeptide: Small ribosomal subunit protein uS7 (156 aa).

Belongs to the universal ribosomal protein uS7 family. As to quaternary structure, part of the 30S ribosomal subunit. Contacts proteins S9 and S11.

In terms of biological role, one of the primary rRNA binding proteins, it binds directly to 16S rRNA where it nucleates assembly of the head domain of the 30S subunit. Is located at the subunit interface close to the decoding center, probably blocks exit of the E-site tRNA. The polypeptide is Small ribosomal subunit protein uS7 (Acaryochloris marina (strain MBIC 11017)).